A 214-amino-acid chain; its full sequence is MVNSIFYIIMGPPGSGKGTQSQRLANHLGLPHISSGDLFRSAIKSATPLGSKAAEYINKGLLVPDNLVWEIVQETLNKPGCKSGCIIDGFPRTLDQAVLLNDFLVKSNAADYRVIQLDVSAEEIISRIHSRFICPACNYVYNQSQGFKECPTCHVALIRRSDDSLEVIHQRLESYEKATVPVINYYEDLGKLIHIPSETSPDEVFQSILACTEA.

14–19 (GSGKGT) is an ATP binding site. Residues 34 to 63 (SSGDLFRSAIKSATPLGSKAAEYINKGLLV) form an NMP region. Residues Ser35, Arg40, 61–63 (LLV), 89–92 (GFPR), and Gln96 each bind AMP. The interval 130–163 (SRFICPACNYVYNQSQGFKECPTCHVALIRRSDD) is LID. Arg131 contacts ATP. 2 residues coordinate Zn(2+): Cys134 and Cys137. 140–141 (VY) contributes to the ATP binding site. Zn(2+)-binding residues include Cys150 and Cys153. AMP-binding residues include Arg160 and Arg171. Position 199 (Thr199) interacts with ATP.

It belongs to the adenylate kinase family. As to quaternary structure, monomer.

The protein localises to the cytoplasm. The enzyme catalyses AMP + ATP = 2 ADP. It functions in the pathway purine metabolism; AMP biosynthesis via salvage pathway; AMP from ADP: step 1/1. Functionally, catalyzes the reversible transfer of the terminal phosphate group between ATP and AMP. Plays an important role in cellular energy homeostasis and in adenine nucleotide metabolism. The protein is Adenylate kinase of Chlamydia caviae (strain ATCC VR-813 / DSM 19441 / 03DC25 / GPIC) (Chlamydophila caviae).